The following is a 449-amino-acid chain: Glucose-6-phosphate isomerase (449 aa).

Glutamate 291 acts as the Proton donor in catalysis. Catalysis depends on residues histidine 312 and lysine 426.

Belongs to the GPI family.

It is found in the cytoplasm. It catalyses the reaction alpha-D-glucose 6-phosphate = beta-D-fructose 6-phosphate. It participates in carbohydrate biosynthesis; gluconeogenesis. It functions in the pathway carbohydrate degradation; glycolysis; D-glyceraldehyde 3-phosphate and glycerone phosphate from D-glucose: step 2/4. Functionally, catalyzes the reversible isomerization of glucose-6-phosphate to fructose-6-phosphate. In Streptococcus pneumoniae (strain ATCC BAA-255 / R6), this protein is Glucose-6-phosphate isomerase.